A 784-amino-acid polypeptide reads, in one-letter code: Toll-like receptor 2 (784 aa).

The signal sequence occupies residues 1 to 20 (MPHTLWMVWVLGVIISLSKE). At 21–588 (ESSNQASLSC…RLSVSECHRT (568 aa)) the chain is on the extracellular side. The cysteines at positions 30 and 36 are disulfide-linked. LRR repeat units follow at residues 54 to 77 (VKSL…RCVN), 78 to 101 (LQAL…SLGS), 102 to 125 (LEHL…PLSS), 126 to 150 (LTFL…HLTK), 151 to 175 (LQIL…GLTF), 176 to 199 (LEEL…SIQN), 200 to 223 (VSHL…VTSS), 224 to 250 (VECL…TNSL), 251 to 278 (IKKF…QISG), 279 to 308 (LLEL…DPGK), 309 to 337 (VETL…LTER), 338 to 361 (VKRI…HLKS), 362 to 388 (LEYL…AWPS), 389 to 414 (LQTL…TLKN), 415 to 437 (LTNI…WPEK), 438 to 457 (MKYL…CIPK), 458 to 478 (TLEI…NLPQ), 479 to 500 (LKEL…LLPM), and 501 to 524 (LLVL…SFHT). N114 is a glycosylation site (N-linked (GlcNAc...) asparagine). N199 is a glycosylation site (N-linked (GlcNAc...) asparagine). C353 and C382 are disulfide-bonded. N-linked (GlcNAc...) asparagine glycosylation occurs at N414. Cysteines 432 and 454 form a disulfide. N442 carries an N-linked (GlcNAc...) asparagine glycan. The 55-residue stretch at 525–579 (LKTLEAGGNNFICSCEFLSFTQEQQALAKVLIDWPANYLCDSPSHVRGQQVQDVR) folds into the LRRCT domain. A helical transmembrane segment spans residues 589 to 609 (ALVSGMCCALFLLILLTGVLC). Residues 610-784 (HRFHGLWYMK…WVNLRAAIKS (175 aa)) are Cytoplasmic-facing. The TIR domain maps to 639-782 (ICYDAFVSYS…GFWVNLRAAI (144 aa)). Residue K754 forms a Glycyl lysine isopeptide (Lys-Gly) (interchain with G-Cter in ubiquitin) linkage. Positions 761-778 (YLEWPMDEAQREGFWVNL) match the ATG16L1-binding motif motif.

The protein belongs to the Toll-like receptor family. As to quaternary structure, interacts with LY96, TLR1 and TLR6 (via extracellular domain). TLR2 seems to exist in heterodimers with either TLR1 or TLR6 before stimulation by the ligand. The heterodimers form bigger oligomers in response to their corresponding ligands as well as further heterotypic associations with other receptors such as CD14 and/or CD36. Binds MYD88 (via TIR domain). Interacts with TICAM1. Interacts with CNPY3. Interacts with ATG16L1. Interacts with PPP1R11. Interacts with TICAM2. Interacts with TIRAP. In terms of assembly, (Microbial infection) Interacts with M.tuberculosis EsxA. (Microbial infection) Interacts with M.bovis MPB83. As to quaternary structure, (Microbial infection) Interacts with Staphylococcus aureus protein SSL5. Post-translationally, glycosylation of Asn-442 is critical for secretion of the N-terminal ectodomain of TLR2. In terms of processing, ubiquitinated at Lys-754 by PPP1R11, leading to its degradation. Deubiquitinated by USP2. As to expression, highly expressed in peripheral blood leukocytes, in particular in monocytes, in bone marrow, lymph node and in spleen. Also detected in lung and in fetal liver. Levels are low in other tissues.

The protein resides in the membrane. It localises to the cytoplasmic vesicle. Its subcellular location is the phagosome membrane. The protein localises to the membrane raft. In terms of biological role, cooperates with LY96 to mediate the innate immune response to bacterial lipoproteins and other microbial cell wall components. Cooperates with TLR1 or TLR6 to mediate the innate immune response to bacterial lipoproteins or lipopeptides. Acts via MYD88 and TRAF6, leading to NF-kappa-B activation, cytokine secretion and the inflammatory response. May also activate immune cells and promote apoptosis in response to the lipid moiety of lipoproteins. Recognizes mycoplasmal macrophage-activating lipopeptide-2kD (MALP-2), soluble tuberculosis factor (STF), phenol-soluble modulin (PSM) and B.burgdorferi outer surface protein A lipoprotein (OspA-L) cooperatively with TLR6. Stimulation of monocytes in vitro with M.tuberculosis PstS1 induces p38 MAPK and ERK1/2 activation primarily via this receptor, but also partially via TLR4. MAPK activation in response to bacterial peptidoglycan also occurs via this receptor. Acts as a receptor for M.tuberculosis lipoproteins LprA, LprG, LpqH and PstS1, some lipoproteins are dependent on other coreceptors (TLR1, CD14 and/or CD36); the lipoproteins act as agonists to modulate antigen presenting cell functions in response to the pathogen. M.tuberculosis HSP70 (dnaK) but not HSP65 (groEL-2) acts via this protein to stimulate NF-kappa-B expression. Recognizes M.tuberculosis major T-antigen EsxA (ESAT-6) which inhibits downstream MYD88-dependent signaling (shown in mouse). Forms activation clusters composed of several receptors depending on the ligand, these clusters trigger signaling from the cell surface and subsequently are targeted to the Golgi in a lipid-raft dependent pathway. Forms the cluster TLR2:TLR6:CD14:CD36 in response to diacylated lipopeptides and TLR2:TLR1:CD14 in response to triacylated lipopeptides. Required for normal uptake of M.tuberculosis, a process that is inhibited by M.tuberculosis LppM. The protein is Toll-like receptor 2 of Homo sapiens (Human).